The sequence spans 285 residues: Extracellular metalloprotease SMAC_06893 (285 aa).

The first 18 residues, 1 to 18 (MQIKSLLLAAAAAPAALG), serve as a signal peptide directing secretion. His-197 is a binding site for Zn(2+). Residue Glu-198 is part of the active site. Residue His-201 participates in Zn(2+) binding. A disulfide bridge links Cys-233 with Cys-260. An N-linked (GlcNAc...) asparagine glycan is attached at Asn-282.

This sequence belongs to the peptidase M43B family.

The protein localises to the secreted. Its function is as follows. Secreted metalloproteinase that allows assimilation of proteinaceous substrates. This Sordaria macrospora (strain ATCC MYA-333 / DSM 997 / K(L3346) / K-hell) protein is Extracellular metalloprotease SMAC_06893.